The sequence spans 73 residues: MPPICNSIENENNSFELTTTISFLKKSKLFKKEINVNEIVSINISQILGEYNSFLINNTIEDLESAIAQNIHN.

This is an uncharacterized protein from Dictyostelium discoideum (Social amoeba).